Here is a 365-residue protein sequence, read N- to C-terminus: Endophilin-B1 (365 aa).

Residue Met1 is modified to N-acetylmethionine. The segment at 1–30 is membrane-binding amphipathic helix; the sequence is MNIMDFNVKKLAADAGTFLSRAVQFTEEKL. Positions 1 to 37 are required for membrane binding; sequence MNIMDFNVKKLAADAGTFLSRAVQFTEEKLGQAEKTE. A BAR domain is found at 27–261; sequence EEKLGQAEKT…LGSFPSNYHS (235 aa). Thr145 bears the Phosphothreonine; by CDK5 mark. Residues 155–195 adopt a coiled-coil conformation; the sequence is YKTIAKERKLLQNKRLDLDAAKTRLKKAKAAETRASSEQEL. The SH3 domain occupies 305 to 365; sequence GGSRRARVLY…VPITYLELLN (61 aa).

The protein belongs to the endophilin family. Homodimer, and heterodimer with SH3GLB2. Binds BAX; induction of apoptosis augments BAX binding. Binds DNM1, HTT, AMPH, BIN1 and ARFGAP1. Interacts with UVRAG; UVRAG bridges the interaction to BECN1 indicative for an association with the PI3K complex II (PI3KC3-C2). In terms of processing, phosphorylated at Thr-145 by CDK5; this phosphorylation is required for autophagy induction in starved neurons and facilitates homodimerization.

It is found in the cytoplasm. It localises to the golgi apparatus membrane. The protein localises to the mitochondrion outer membrane. The protein resides in the cytoplasmic vesicle. Its subcellular location is the autophagosome membrane. It is found in the midbody. In terms of biological role, may be required for normal outer mitochondrial membrane dynamics. Required for coatomer-mediated retrograde transport in certain cells. May recruit other proteins to membranes with high curvature. May promote membrane fusion. Involved in activation of caspase-dependent apoptosis by promoting BAX/BAK1 activation. Involved in caspase-independent apoptosis during nutrition starvation and involved in the regulation of autophagy. Activates lipid kinase activity of PIK3C3 during autophagy probably by associating with the PI3K complex II (PI3KC3-C2). Associated with PI3KC3-C2 during autophagy may regulate the trafficking of ATG9A from the Golgi complex to the peripheral cytoplasm for the formation of autophagosomes by inducing Golgi membrane tubulation and fragmentation. Involved in regulation of degradative endocytic trafficking and cytokinesis, probably in the context of PI3KC3-C2. In Bos taurus (Bovine), this protein is Endophilin-B1 (SH3GLB1).